The primary structure comprises 111 residues: Small ubiquitin-related modifier 3 (111 aa).

The Ubiquitin-like domain occupies 16–93 (AHVILKVKSQ…IDACRAMSGG (78 aa)). A Glycyl lysine isopeptide (Gly-Lys) (interchain with K-? in acceptor proteins) cross-link involves residue G93.

Belongs to the ubiquitin family. SUMO subfamily. As to quaternary structure, interacts with SAE2, SCE1, SIZ1 and MMS21. Covalently attached to a number of proteins. Interacts with NPR1; this interaction promotes NPR1 phosphorylation and triggers its sumoylation and subsequent degradation.

The protein resides in the nucleus. It localises to the cytoplasm. Functionally, ubiquitin-like protein which can be covalently attached to target lysines as a monomer. Does not seem to be involved in protein degradation and may function as an antagonist of ubiquitin in the degradation process. Promotes NPR1 sumoylation to activate defense gene expression and regulate its degradation. In Arabidopsis thaliana (Mouse-ear cress), this protein is Small ubiquitin-related modifier 3.